Consider the following 292-residue polypeptide: MTTARYRPTWDLALDPLVSCKLCLGEYPAEQMTTIAQCQCIFCTLCLKQYVELLIKEGLETAISCPDAACPKQGHLQENEIECMVAAEIMQRYKKLQFEREVLFDPCRTWCPASTCQAVCQLQDIGLQTPQLVQCKACDMEFCSACKARWHPGQGCPETMPITFLPGETSSAFKMEEGDAPIKRCPKCRVYIERDEGCAQMMCKNCKHAFCWYCLESLDDDFLLIHYDKGPCRNKLGHSRASVIWHRTQVVGIFAGFGLLLLVASPFLLLATPFVLCCKCKCSKGDDDPLPT.

The segment at 16 to 236 (PLVSCKLCLG…YDKGPCRNKL (221 aa)) is TRIAD supradomain. Cys-20, Cys-23, Cys-43, Cys-46, Cys-111, Cys-116, Cys-135, Cys-138, Cys-143, Cys-146, His-151, Cys-156, Cys-185, and Cys-188 together coordinate Zn(2+). Residues 20–70 (CKLCLGEYPAEQMTTIAQCQCIFCTLCLKQYVELLIKEGLETAISCPDAAC) form an RING-type 1 zinc finger. The IBR-type zinc-finger motif lies at 91 to 156 (QRYKKLQFER…KARWHPGQGC (66 aa)). The RING-type 2; atypical zinc finger occupies 185–214 (CPKCRVYIERDEGCAQMMCKNCKHAFCWYC). Cys-198 is an active-site residue. Cys-203, Cys-206, Cys-211, Cys-214, His-226, and Cys-232 together coordinate Zn(2+). The helical transmembrane segment at 250–270 (VVGIFAGFGLLLLVASPFLLL) threads the bilayer.

This sequence belongs to the RBR family. RNF144 subfamily. Self-associates. Interacts with UBE2L3. Autoubiquitinated.

Its subcellular location is the cell membrane. The protein resides in the cytoplasmic vesicle membrane. The catalysed reaction is [E2 ubiquitin-conjugating enzyme]-S-ubiquitinyl-L-cysteine + [acceptor protein]-L-lysine = [E2 ubiquitin-conjugating enzyme]-L-cysteine + [acceptor protein]-N(6)-ubiquitinyl-L-lysine.. The protein operates within protein modification; protein ubiquitination. E3 ubiquitin-protein ligase which accepts ubiquitin from E2 ubiquitin-conjugating enzymes UBE2L3 and UBE2L6 in the form of a thioester and then directly transfers the ubiquitin to targeted substrates. Mediates the ubiquitination and degradation of the DNA damage kinase PRKDC during DNA damage. Positively regulates DNA virus or exogenous cytosolic DNA-triggered innate immune response by mediating STING1 ubiquitination and increasing its 'Lys-6'-linked ubiquitination and translocation from the endoplasmic reticulum to the Golgi leading to downstream signaling pathways. Plays a positive role in EGF-dependent cell proliferation by prolonging EGF/EGFR signaling during EGF stimulation through EGFR ubiquitination. Increases ERK activity independently of EGFR signaling by promoting polyubiquitination and subsequent degradation of VRK3 in the cytosol. In Mus musculus (Mouse), this protein is E3 ubiquitin-protein ligase RNF144A (Rnf144a).